Here is a 436-residue protein sequence, read N- to C-terminus: GTPase Der (436 aa).

EngA-type G domains follow at residues proline 4 to glutamate 167 and isoleucine 176 to lysine 351. Residues glycine 10–serine 17, aspartate 57–isoleucine 61, asparagine 119–aspartate 122, glycine 182–serine 189, aspartate 229–methionine 233, and asparagine 294–aspartate 297 each bind GTP. Positions lysine 352–asparagine 436 constitute a KH-like domain.

It belongs to the TRAFAC class TrmE-Era-EngA-EngB-Septin-like GTPase superfamily. EngA (Der) GTPase family. In terms of assembly, associates with the 50S ribosomal subunit.

Functionally, GTPase that plays an essential role in the late steps of ribosome biogenesis. In Staphylococcus carnosus (strain TM300), this protein is GTPase Der.